A 165-amino-acid polypeptide reads, in one-letter code: Large ribosomal subunit protein uL10 (165 aa).

This sequence belongs to the universal ribosomal protein uL10 family. Part of the ribosomal stalk of the 50S ribosomal subunit. The N-terminus interacts with L11 and the large rRNA to form the base of the stalk. The C-terminus forms an elongated spine to which L12 dimers bind in a sequential fashion forming a multimeric L10(L12)X complex.

In terms of biological role, forms part of the ribosomal stalk, playing a central role in the interaction of the ribosome with GTP-bound translation factors. This is Large ribosomal subunit protein uL10 (rplJ) from Halalkalibacterium halodurans (strain ATCC BAA-125 / DSM 18197 / FERM 7344 / JCM 9153 / C-125) (Bacillus halodurans).